The following is a 121-amino-acid chain: Large ribosomal subunit protein uL14 (121 aa).

This sequence belongs to the universal ribosomal protein uL14 family. In terms of assembly, part of the 50S ribosomal subunit. Forms a cluster with proteins L3 and L19. In the 70S ribosome, L14 and L19 interact and together make contacts with the 16S rRNA in bridges B5 and B8.

Functionally, binds to 23S rRNA. Forms part of two intersubunit bridges in the 70S ribosome. This is Large ribosomal subunit protein uL14 from Synechococcus elongatus (strain ATCC 33912 / PCC 7942 / FACHB-805) (Anacystis nidulans R2).